We begin with the raw amino-acid sequence, 309 residues long: Glutaminase (309 aa).

Substrate-binding residues include S65, N117, E162, N169, Y193, Y245, and V263.

It belongs to the glutaminase family. Homotetramer.

The enzyme catalyses L-glutamine + H2O = L-glutamate + NH4(+). The chain is Glutaminase from Bacillus mycoides (strain KBAB4) (Bacillus weihenstephanensis).